The sequence spans 226 residues: ATP synthase subunit a (226 aa).

Helical transmembrane passes span Leu18 to Leu38, Phe74 to Phe94, Leu100 to Ile120, Leu158 to Gly180, and Ile197 to Leu217.

This sequence belongs to the ATPase A chain family. F-type ATPases have 2 components, CF(1) - the catalytic core - and CF(0) - the membrane proton channel. CF(1) has five subunits: alpha(3), beta(3), gamma(1), delta(1), epsilon(1). CF(0) has three main subunits: a, b and c.

It is found in the mitochondrion inner membrane. Functionally, mitochondrial membrane ATP synthase (F(1)F(0) ATP synthase or Complex V) produces ATP from ADP in the presence of a proton gradient across the membrane which is generated by electron transport complexes of the respiratory chain. F-type ATPases consist of two structural domains, F(1) - containing the extramembraneous catalytic core and F(0) - containing the membrane proton channel, linked together by a central stalk and a peripheral stalk. During catalysis, ATP synthesis in the catalytic domain of F(1) is coupled via a rotary mechanism of the central stalk subunits to proton translocation. Key component of the proton channel; it may play a direct role in the translocation of protons across the membrane. In Anopheles gambiae (African malaria mosquito), this protein is ATP synthase subunit a (mt:ATPase6).